Reading from the N-terminus, the 186-residue chain is Protein Syd (186 aa).

The protein belongs to the Syd family.

It is found in the cell inner membrane. Functionally, interacts with the SecY protein in vivo. May bind preferentially to an uncomplexed state of SecY, thus functioning either as a chelating agent for excess SecY in the cell or as a regulatory factor that negatively controls the translocase function. The protein is Protein Syd of Erwinia tasmaniensis (strain DSM 17950 / CFBP 7177 / CIP 109463 / NCPPB 4357 / Et1/99).